The following is a 693-amino-acid chain: Translation factor GUF1 homolog, chloroplastic (693 aa).

The transit peptide at 1–51 (MATDLSSSSTLLLSRNCKTPPFYHTTNSLSLSKTHHLYASRNAVVSRLRLL) directs the protein to the chloroplast. Residues 86 to 267 (SNIRNFCIIA…AIVERIPSPR (182 aa)) form the tr-type G domain. GTP-binding positions include 95–102 (AHIDHGKS), 160–164 (DTPGH), and 214–217 (NKID).

The protein belongs to the TRAFAC class translation factor GTPase superfamily. Classic translation factor GTPase family. LepA subfamily.

It is found in the plastid. It localises to the chloroplast. The catalysed reaction is GTP + H2O = GDP + phosphate + H(+). Functionally, promotes chloroplast protein synthesis. May act as a fidelity factor of the translation reaction, by catalyzing a one-codon backward translocation of tRNAs on improperly translocated ribosomes. This is Translation factor GUF1 homolog, chloroplastic from Ricinus communis (Castor bean).